The following is a 104-amino-acid chain: MQSTRLTWTNARAQQAILALAATGHGVYCERAVAFVISAITNNSLSWPTLLNLFDLVVAVERNLFKKSWALNALVNFCVANGDGFTVQHQLLNKILGNLIEKYY.

This is an uncharacterized protein from Orgyia pseudotsugata (Douglas-fir tussock moth).